The primary structure comprises 395 residues: Tyrosine--tRNA ligase 2 (395 aa).

The short motif at 42 to 51 is the 'HIGH' region element; sequence PTAPDIHLGH. The short motif at 226 to 230 is the 'KMSKS' region element; that stretch reads KMSKS. Lys-229 contacts ATP. Positions 334–395 constitute an S4 RNA-binding domain; it reads TPMANLLKEA…KRKFARITIA (62 aa).

The protein belongs to the class-I aminoacyl-tRNA synthetase family. TyrS type 2 subfamily. Homodimer.

The protein resides in the cytoplasm. The enzyme catalyses tRNA(Tyr) + L-tyrosine + ATP = L-tyrosyl-tRNA(Tyr) + AMP + diphosphate + H(+). Functionally, catalyzes the attachment of tyrosine to tRNA(Tyr) in a two-step reaction: tyrosine is first activated by ATP to form Tyr-AMP and then transferred to the acceptor end of tRNA(Tyr). This chain is Tyrosine--tRNA ligase 2, found in Vibrio vulnificus (strain CMCP6).